The following is a 162-amino-acid chain: Caveolin-2 (162 aa).

The Cytoplasmic segment spans residues 1–86 (MGLETEKADV…FEISKYVMYK (86 aa)). Y19 bears the Phosphotyrosine; by SRC mark. 2 positions are modified to phosphoserine: S20 and S23. Y27 is modified (phosphotyrosine; by SRC). A Phosphoserine modification is found at S36. An intramembrane region (helical) is located at residues 87–107 (FLTVFLAIPLAFIAGILFATL). Topologically, residues 108-162 (SCLHIWILMPFVKTCLMVLPSVQTIWKSVTDVIIAPLCTSVGRCFSSVSLQLSQD) are cytoplasmic.

Belongs to the caveolin family. Monomer or homodimer. Interacts with CAV1; the interaction forms a stable heterooligomeric complex that is required for targeting to lipid rafts and for caveolae formation. Tyrosine phosphorylated forms do not form heterooligomers with the Tyr-19-phosphorylated form existing as a monomer or dimer, and the Tyr-27-form as a monomer only. Interacts (tyrosine phosphorylated form) with the SH2 domain-containing proteins, RASA1, NCK1 and SRC. Interacts (tyrosine phosphorylated form) with INSR, the interaction (Tyr-27-phosphorylated form) is increased on insulin stimulation. Interacts (Tyr-19 phosphorylated form) with MAPK1 (phosphorylated form); the interaction, promoted by insulin, leads to nuclear location and MAPK1 activation. Interacts with STAT3; the interaction is increased on insulin-induced tyrosine phosphorylation leading to STAT activation. Phosphorylated on serine and tyrosine residues. CAV1 promotes phosphorylation on Ser-23 which then targets the complex to the plasma membrane, lipid rafts and caveolae. Phosphorylation on Ser-36 appears to modulate mitosis in endothelial cells. Phosphorylation on both Tyr-19 and Tyr-27 is required for insulin-induced 'Ser-727' phosphorylation of STAT3 and its activation. Phosphorylation on Tyr-19 is required for insulin-induced phosphorylation of MAPK1 and DNA binding of STAT3. Tyrosine phosphorylation is induced by both EGF and insulin (By. similarity).

Its subcellular location is the nucleus. It localises to the cytoplasm. The protein localises to the golgi apparatus membrane. It is found in the cell membrane. The protein resides in the membrane. Its subcellular location is the caveola. In terms of biological role, may act as a scaffolding protein within caveolar membranes. Interacts directly with G-protein alpha subunits and can functionally regulate their activity. Acts as an accessory protein in conjunction with CAV1 in targeting to lipid rafts and driving caveolae formation. The Ser-36 phosphorylated form has a role in modulating mitosis in endothelial cells. Positive regulator of cellular mitogenesis of the MAPK signaling pathway. Required for the insulin-stimulated nuclear translocation and activation of MAPK1 and STAT3, and the subsequent regulation of cell cycle progression. The polypeptide is Caveolin-2 (CAV2) (Pan troglodytes (Chimpanzee)).